A 541-amino-acid chain; its full sequence is Chaperonin GroEL (541 aa).

ATP is bound by residues 29–32, 86–90, glycine 413, 476–478, and aspartate 492; these read TLGP, DGTTT, and NAA.

The protein belongs to the chaperonin (HSP60) family. As to quaternary structure, forms a cylinder of 14 subunits composed of two heptameric rings stacked back-to-back. Interacts with the co-chaperonin GroES.

The protein localises to the cytoplasm. It catalyses the reaction ATP + H2O + a folded polypeptide = ADP + phosphate + an unfolded polypeptide.. Together with its co-chaperonin GroES, plays an essential role in assisting protein folding. The GroEL-GroES system forms a nano-cage that allows encapsulation of the non-native substrate proteins and provides a physical environment optimized to promote and accelerate protein folding. This Streptococcus equi subsp. zooepidemicus (strain MGCS10565) protein is Chaperonin GroEL.